We begin with the raw amino-acid sequence, 726 residues long: Mitotic spindle checkpoint protein MAD1 (726 aa).

Residues 1 to 30 (MILRTPQPKRLRSDAGESPFPTGATGSGNQ) are disordered. Coiled-coil stretches lie at residues 68 to 246 (ADVL…LKLI) and 272 to 625 (SDNS…VFAD).

The protein belongs to the MAD1 family. As to quaternary structure, homodimer. Part of the mitotic checkpoint complex (MCC). Interacts with MAD2 and NUA.

The protein localises to the nucleus envelope. Its function is as follows. Required for the execution of the mitotic checkpoint which monitors the process of kinetochore-spindle attachment and delays the onset of anaphase when this process is not complete. It inhibits the activity of the anaphase promoting complex by sequestering CDC20 until all chromosomes are aligned at the metaphase plate. Required for anchoring MAD2 to the nuclear envelope. The protein is Mitotic spindle checkpoint protein MAD1 of Arabidopsis thaliana (Mouse-ear cress).